The following is a 433-amino-acid chain: Serine hydroxymethyltransferase (433 aa).

121–123 (AHV) lines the (6S)-5,6,7,8-tetrahydrofolate pocket. Position 227 is an N6-(pyridoxal phosphate)lysine (Lys-227). Glu-243 is a (6S)-5,6,7,8-tetrahydrofolate binding site.

This sequence belongs to the SHMT family. As to quaternary structure, homodimer. The cofactor is pyridoxal 5'-phosphate.

Its subcellular location is the cytoplasm. The catalysed reaction is 5,10-methylenetetrahydrosulfopterin + glycine + H2O = tetrahydrosulfopterin + L-serine. It functions in the pathway amino-acid biosynthesis; glycine biosynthesis; glycine from L-serine: step 1/1. Is completely inhibited by addition of NaCNBH(3) in vitro; this reagent is a known inhibitor of PLP enzymes, that reduces the internal aldimine of PLP to the catalytically inactive and stable secondary amine. Is also inhibited by L-cysteine, which forms a thiazolidine complex with the active site PLP. Catalyzes the reversible interconversion of serine and glycine with the modified folate sulfopterin serving as the one-carbon carrier. Cannot use tetrahydrofolate (THF or H4PteGlu) as the pteridine substrate. Also exhibits a pteridine-independent aldolase activity toward beta-hydroxyamino acids, producing glycine and aldehydes, via a retro-aldol mechanism. Thus, is able to catalyze the cleavage of both allo-threonine and beta-phenylserine. This chain is Serine hydroxymethyltransferase, found in Saccharolobus solfataricus (strain ATCC 35092 / DSM 1617 / JCM 11322 / P2) (Sulfolobus solfataricus).